The chain runs to 598 residues: Jacalin-related lectin 17 (598 aa).

The segment at 1-23 is disordered; it reads MAQRLEAEGNKNFKGKSKWDDGS. 4 consecutive Jacalin-type lectin domains span residues 2–148, 151–293, 295–445, and 452–595; these read AQRL…YVTW, PTKL…YFTT, PFTK…HFCP, and GEKV…HVLP.

This sequence belongs to the jacalin lectin family.

The sequence is that of Jacalin-related lectin 17 (JAL17) from Arabidopsis thaliana (Mouse-ear cress).